The following is a 196-amino-acid chain: dITP/XTP pyrophosphatase (196 aa).

7–12 (TGNAGK) contacts substrate. The Mg(2+) site is built by Glu-39 and Asp-68. Asp-68 functions as the Proton acceptor in the catalytic mechanism. Substrate-binding positions include Ser-69, 153-156 (HGYD), Lys-176, and 181-182 (HR).

The protein belongs to the HAM1 NTPase family. Homodimer. Requires Mg(2+) as cofactor.

The catalysed reaction is XTP + H2O = XMP + diphosphate + H(+). It carries out the reaction dITP + H2O = dIMP + diphosphate + H(+). The enzyme catalyses ITP + H2O = IMP + diphosphate + H(+). Functionally, pyrophosphatase that catalyzes the hydrolysis of nucleoside triphosphates to their monophosphate derivatives, with a high preference for the non-canonical purine nucleotides XTP (xanthosine triphosphate), dITP (deoxyinosine triphosphate) and ITP. Seems to function as a house-cleaning enzyme that removes non-canonical purine nucleotides from the nucleotide pool, thus preventing their incorporation into DNA/RNA and avoiding chromosomal lesions. In Thioalkalivibrio sulfidiphilus (strain HL-EbGR7), this protein is dITP/XTP pyrophosphatase.